We begin with the raw amino-acid sequence, 472 residues long: Mixed lineage kinase domain-like protein (472 aa).

The tract at residues 1-143 is N-terminal bundle and brace (NBB); mediates INSP6 binding; it reads MDKLGQIIKL…QEDRQDAEED (143 aa). Residues 61-81 adopt a coiled-coil conformation; sequence LGRFDEVLKEANQQIEKFSKK. Serine 124 bears the Phosphoserine mark. Positions 138–229 form a coiled coil; sequence QDAEEDGNEN…VFNNPQAESV (92 aa). One can recognise a Protein kinase domain in the interval 192–456; sequence GPPWTKLKTS…DGRSLSGRER (265 aa). Residues 198 to 206 and lysine 219 contribute to the ATP site; that span reads LKTSKMSTI. 2 positions are modified to phosphoserine; by RIPK3: serine 345 and serine 347. The residue at position 349 (threonine 349) is a Phosphothreonine; by RIPK3. At serine 352 the chain carries Phosphoserine; by RIPK3.

The protein belongs to the protein kinase superfamily. Homooligomer. Homotrimer; forms homotrimers on necroptosis induction. Upon TNF-induced necrosis, forms in complex with PGAM5, RIPK1 and RIPK3. Within this complex, may play a role in the proper targeting of RIPK1-RIPK3 to its downstream effector PGAM5. Interacts with RIPK3; the interaction is direct and promotes its phosphorylation and subsequent activation. Phosphorylation by RIPK3 induces a conformational switch that is required for necroptosis. It also induces homotrimerization and localization to the plasma membrane. In terms of tissue distribution, highly expressed in thymus, colon, intestine, liver, spleen and lung. Expressed at much lower level in skeletal muscle, heart and kidney. Not detected in brain.

It localises to the cytoplasm. The protein localises to the cell membrane. It is found in the nucleus. Its activity is regulated as follows. Activated via binding to highly phosphorylated inositol phosphates such as inositolhexakisphosphate (InsP6) which mediates the release of an N-terminal auto-inhibitory region. Activation requires not only RIPK3-dependent phosphorylation but also binding to highly phosphorylated inositol phosphates. Functionally, pseudokinase that plays a key role in TNF-induced necroptosis, a programmed cell death process. Does not have protein kinase activity. Activated following phosphorylation by RIPK3, leading to homotrimerization, localization to the plasma membrane and execution of programmed necrosis characterized by calcium influx and plasma membrane damage. In addition to TNF-induced necroptosis, necroptosis can also take place in the nucleus in response to orthomyxoviruses infection: following ZBP1 activation, which senses double-stranded Z-RNA structures, nuclear RIPK3 catalyzes phosphorylation and activation of MLKL, promoting disruption of the nuclear envelope and leakage of cellular DNA into the cytosol. Binds to highly phosphorylated inositol phosphates such as inositolhexakisphosphate (InsP6) which is essential for its necroptotic function. This chain is Mixed lineage kinase domain-like protein, found in Mus musculus (Mouse).